Here is a 195-residue protein sequence, read N- to C-terminus: Large ribosomal subunit protein bL17 (195 aa).

The disordered stretch occupies residues 132-195; the sequence is ARGTRFAARK…TEAKDTKPES (64 aa). The segment covering 159 to 186 has biased composition (low complexity); sequence PTAAAVAAEAQAEQPTAEAVAADDAATT.

The protein belongs to the bacterial ribosomal protein bL17 family. Part of the 50S ribosomal subunit. Contacts protein L32.

The chain is Large ribosomal subunit protein bL17 from Parafrankia sp. (strain EAN1pec).